A 359-amino-acid chain; its full sequence is Golgi-resident adenosine 3',5'-bisphosphate 3'-phosphatase (359 aa).

M1 bears the N-acetylmethionine mark. The Cytoplasmic portion of the chain corresponds to 1 to 12 (MAPMGIRLSPLG). Residues 13–33 (VAVFCLLGLGVLYHLYSGFLA) form a helical membrane-spanning segment. The Lumenal segment spans residues 34-359 (GRFSLFGLGG…LPDLEKTGHK (326 aa)). Positions 86-106 (ESNVLHEKSKGKTREGAEDKM) are disordered. The active-site Proton acceptor is the D110. Mg(2+)-binding residues include E133, D174, L176, and D177. T179 functions as the Proton acceptor in the catalytic mechanism. Residues S242 and H245 each contribute to the AMP site. An N-linked (GlcNAc...) asparagine glycan is attached at N259. 2 residues coordinate AMP: G268 and K272. D300 is a Mg(2+) binding site.

It belongs to the inositol monophosphatase superfamily. Mg(2+) is required as a cofactor. Contains N-linked glycan resistant to endoglycosydase H.

The protein localises to the golgi apparatus. The protein resides in the trans-Golgi network membrane. The catalysed reaction is adenosine 3',5'-bisphosphate + H2O = AMP + phosphate. It participates in sulfur metabolism. With respect to regulation, strongly inhibited by lithium. In terms of biological role, exhibits 3'-nucleotidase activity toward adenosine 3',5'-bisphosphate (PAP), namely hydrolyzes adenosine 3',5'-bisphosphate into adenosine 5'-monophosphate (AMP) and a phosphate. May play a role in the formation of skeletal elements derived through endochondral ossification, possibly by clearing adenosine 3',5'-bisphosphate produced by Golgi sulfotransferases during glycosaminoglycan sulfation. Has no activity toward 3'-phosphoadenosine 5'-phosphosulfate (PAPS) or inositol phosphate (IP) substrates including I(1)P, I(1,4)P2, I(1,3,4)P3, I(1,4,5)P3 and I(1,3,4,5)P4. In Homo sapiens (Human), this protein is Golgi-resident adenosine 3',5'-bisphosphate 3'-phosphatase.